Consider the following 93-residue polypeptide: YcgL domain-containing protein Shal_1837 (93 aa).

The region spanning 1-85 (MICAVYKSRR…PVVNLLEQHK (85 aa)) is the YcgL domain.

The polypeptide is YcgL domain-containing protein Shal_1837 (Shewanella halifaxensis (strain HAW-EB4)).